Here is a 395-residue protein sequence, read N- to C-terminus: LL-diaminopimelate aminotransferase (395 aa).

Positions 14 and 41 each coordinate substrate. Pyridoxal 5'-phosphate is bound by residues tyrosine 71, 104 to 105, tyrosine 128, asparagine 174, tyrosine 205, and 233 to 235; these read AK and SFS. Substrate contacts are provided by lysine 105, tyrosine 128, and asparagine 174. Lysine 236 carries the N6-(pyridoxal phosphate)lysine modification. 2 residues coordinate pyridoxal 5'-phosphate: arginine 244 and asparagine 275. Residues asparagine 275 and arginine 368 each coordinate substrate.

It belongs to the class-I pyridoxal-phosphate-dependent aminotransferase family. LL-diaminopimelate aminotransferase subfamily. In terms of assembly, homodimer. Pyridoxal 5'-phosphate serves as cofactor.

The enzyme catalyses (2S,6S)-2,6-diaminopimelate + 2-oxoglutarate = (S)-2,3,4,5-tetrahydrodipicolinate + L-glutamate + H2O + H(+). The protein operates within amino-acid biosynthesis; L-lysine biosynthesis via DAP pathway; LL-2,6-diaminopimelate from (S)-tetrahydrodipicolinate (aminotransferase route): step 1/1. Its function is as follows. Involved in the synthesis of meso-diaminopimelate (m-DAP or DL-DAP), required for both lysine and peptidoglycan biosynthesis. Catalyzes the direct conversion of tetrahydrodipicolinate to LL-diaminopimelate. In Chlamydia caviae (strain ATCC VR-813 / DSM 19441 / 03DC25 / GPIC) (Chlamydophila caviae), this protein is LL-diaminopimelate aminotransferase.